A 141-amino-acid polypeptide reads, in one-letter code: Large ribosomal subunit protein uL11 (141 aa).

This sequence belongs to the universal ribosomal protein uL11 family. As to quaternary structure, part of the ribosomal stalk of the 50S ribosomal subunit. Interacts with L10 and the large rRNA to form the base of the stalk. L10 forms an elongated spine to which L12 dimers bind in a sequential fashion forming a multimeric L10(L12)X complex. One or more lysine residues are methylated.

Functionally, forms part of the ribosomal stalk which helps the ribosome interact with GTP-bound translation factors. This Tropheryma whipplei (strain TW08/27) (Whipple's bacillus) protein is Large ribosomal subunit protein uL11.